The primary structure comprises 361 residues: AT-hook motif nuclear-localized protein 12 (361 aa).

Disordered regions lie at residues 29–143 (SQVA…GRKQ) and 286–361 (NNKT…LTRG). The segment covering 48–59 (SNPNIHHPQANN) has biased composition (polar residues). Residues 85-95 (QPPPPPPPPEE) are compositionally biased toward pro residues. Residues 99–107 (KRKRGRPRK) carry the Bipartite nuclear localization signal motif. 2 DNA-binding regions (a.T hook) span residues 99-111 (KRKRGRPRKYGEP) and 130-142 (KRARGRPPGTGRK). The region spanning 154 to 297 (TSAGLAFAPH…KTIRQEKEPN (144 aa)) is the PPC domain. Low complexity predominate over residues 306–322 (ETTPGSAAEPAASAGQQ).

In terms of assembly, homodimer. Interacts with AHL27, AHL29 and ATAF2/NAC081.

Its subcellular location is the nucleus. Its function is as follows. Transcription factor that specifically binds AT-rich DNA sequences related to the nuclear matrix attachment regions (MARs). The sequence is that of AT-hook motif nuclear-localized protein 12 from Arabidopsis thaliana (Mouse-ear cress).